The sequence spans 592 residues: NADH-quinone oxidoreductase subunit C/D (592 aa).

The segment at 1-183 is NADH dehydrogenase I subunit C; it reads MSAAQSPTAQ…DPYTLTVEGQ (183 aa). The tract at residues 207–592 is NADH dehydrogenase I subunit D; the sequence is DYMFLNLGPN…IDFVMADVDR (386 aa).

In the N-terminal section; belongs to the complex I 30 kDa subunit family. The protein in the C-terminal section; belongs to the complex I 49 kDa subunit family. NDH-1 is composed of 13 different subunits. Subunits NuoB, CD, E, F, and G constitute the peripheral sector of the complex.

Its subcellular location is the cell inner membrane. It catalyses the reaction a quinone + NADH + 5 H(+)(in) = a quinol + NAD(+) + 4 H(+)(out). Functionally, NDH-1 shuttles electrons from NADH, via FMN and iron-sulfur (Fe-S) centers, to quinones in the respiratory chain. The immediate electron acceptor for the enzyme in this species is believed to be ubiquinone. Couples the redox reaction to proton translocation (for every two electrons transferred, four hydrogen ions are translocated across the cytoplasmic membrane), and thus conserves the redox energy in a proton gradient. The sequence is that of NADH-quinone oxidoreductase subunit C/D from Chromohalobacter salexigens (strain ATCC BAA-138 / DSM 3043 / CIP 106854 / NCIMB 13768 / 1H11).